Reading from the N-terminus, the 101-residue chain is Urease subunit beta (101 aa).

Belongs to the urease beta subunit family. As to quaternary structure, heterotrimer of UreA (gamma), UreB (beta) and UreC (alpha) subunits. Three heterotrimers associate to form the active enzyme.

It is found in the cytoplasm. It carries out the reaction urea + 2 H2O + H(+) = hydrogencarbonate + 2 NH4(+). It functions in the pathway nitrogen metabolism; urea degradation; CO(2) and NH(3) from urea (urease route): step 1/1. The chain is Urease subunit beta from Ralstonia nicotianae (strain ATCC BAA-1114 / GMI1000) (Ralstonia solanacearum).